Reading from the N-terminus, the 247-residue chain is Granzyme B (247 aa).

An N-terminal signal peptide occupies residues 1–18; it reads MQPILLLLAFLLLPRADA. A propeptide spans 19–20 (activation peptide); it reads GE. One can recognise a Peptidase S1 domain in the interval 21-245; sequence IIGGHEAKPH…FVHWIKKTMK (225 aa). Cys49 and Cys65 are disulfide-bonded. The active-site Charge relay system is His64. N-linked (GlcNAc...) asparagine glycans are attached at residues Asn71 and Asn104. The Charge relay system role is filled by Asp108. 2 cysteine pairs are disulfide-bonded: Cys142-Cys209 and Cys173-Cys188. Catalysis depends on Ser203, which acts as the Charge relay system.

It belongs to the peptidase S1 family. Granzyme subfamily.

The protein localises to the secreted. Its subcellular location is the cytolytic granule. It catalyses the reaction Preferential cleavage: -Asp-|-Xaa- &gt;&gt; -Asn-|-Xaa- &gt; -Met-|-Xaa-, -Ser-|-Xaa-.. With respect to regulation, inactivated by the serine protease inhibitor diisopropylfluorophosphate. Its function is as follows. Abundant protease in the cytosolic granules of cytotoxic T-cells and NK-cells which activates caspase-independent pyroptosis when delivered into the target cell through the immunological synapse. It cleaves after Asp. Once delivered into the target cell, acts by catalyzing cleavage of gasdermin-E (GSDME), releasing the pore-forming moiety of GSDME, thereby triggering pyroptosis and target cell death. Seems to be linked to an activation cascade of caspases (aspartate-specific cysteine proteases) responsible for apoptosis execution. Cleaves caspase-3, -9 and -10 (CASP3, CASP9 and CASP10, respectively) to give rise to active enzymes mediating apoptosis. Cleaves and activates CASP7 in response to bacterial infection, promoting plasma membrane repair. The sequence is that of Granzyme B from Homo sapiens (Human).